A 1883-amino-acid polypeptide reads, in one-letter code: Transmembrane protein 131 (1883 aa).

The N-terminal stretch at 1–22 (MGKRAGGGATGATTAAVSTSAG) is a signal peptide. Residues 23-1117 (AGLEPAAARS…AEALPRPNWE (1095 aa)) lie on the Lumenal side of the membrane. The interval 109-283 (RFEPPMLDFH…ETKGVMRASF (175 aa)) is papD-L domain. Asn-300 carries N-linked (GlcNAc...) asparagine glycosylation. Phosphoserine is present on Ser-803. A helical membrane pass occupies residues 1118 to 1138 (LALYIIISGIMSALFLLVIGT). At 1139 to 1883 (AYLEAQGIWE…WSNSHFPHEN (745 aa)) the chain is on the cytoplasmic side. 5 disordered regions span residues 1198–1580 (GAGG…DSLY), 1593–1656 (LKQR…KNGN), 1670–1712 (PGGN…PVSN), 1766–1789 (WESPATDPSPSWPASSGSPTHTAT), and 1832–1858 (MGTENSPAPHAPSTSSPADDLGQTYNP). Residues 1237–1261 (AKNSSSTSSRTSAQAASSQSANKTS) show a composition bias toward low complexity. A compositionally biased stretch (pro residues) spans 1302 to 1316 (PQPPLPPPVPQPQEP). Phosphoserine occurs at positions 1322 and 1342. Basic and acidic residues-rich tracts occupy residues 1330 to 1343 (SHPERASSARHSSE) and 1353 to 1364 (AMDKDFDHHDSP). Ser-1375 bears the Phosphoserine mark. The segment covering 1380–1394 (SKGKGKPLQRKVKPP) has biased composition (basic residues). Positions 1395 to 1417 (KKQEEKEKKGKGKPQEDELKDSL) are enriched in basic and acidic residues. A compositionally biased stretch (low complexity) spans 1423–1434 (SSTTTETSNPDT). Over residues 1436-1458 (PLLKEDTEKQKGKQAMPEKHESE) the composition is skewed to basic and acidic residues. 2 stretches are compositionally biased toward polar residues: residues 1510-1526 (AMTSGSKSRNAQKTKGT) and 1542-1553 (PNSQELGNTSSS). The span at 1602-1611 (PASPSPPAAP) shows a compositional bias: pro residues. Positions 1619-1630 (SYSSIVNSSSSS) are enriched in low complexity. Residues 1678-1690 (VSSNKTGFSSSLG) are compositionally biased toward polar residues. Low complexity-rich tracts occupy residues 1773-1784 (PSPSWPASSGSP) and 1837-1849 (SPAPHAPSTSSPA). 2 positions are modified to phosphoserine: Ser-1863 and Ser-1871.

It belongs to the TMEM131 family. Interacts (via PapD-L domain) with COL1A2 (via C-terminus); the interaction is direct, may occur with other collagen proteins, and is involved in assembly and TRAPPIII ER-to-Golgi transport complex-dependent secretion of collagen. Interacts (via C-terminus) with TRAPPC8 (via C-terminus); the interaction is direct.

The protein resides in the membrane. Collagen binding transmembrane protein involved in collagen secretion by recruiting the ER-to-Golgi transport complex TRAPPIII. May play a role in the immune response to viral infection. The protein is Transmembrane protein 131 of Homo sapiens (Human).